A 373-amino-acid polypeptide reads, in one-letter code: Saccharopine dehydrogenase [NAD(+), L-lysine-forming] (373 aa).

N-acetylalanine; partial is present on A2. L-saccharopine contacts are provided by R18 and K77. K77 serves as the catalytic Proton acceptor. The active-site Proton donor is the H96. Position 101 (Q101) interacts with L-saccharopine. R130 contacts NAD(+). Positions 131 and 135 each coordinate L-saccharopine. Residues 203 to 204 (GR), D227, T231, Y251, and V278 contribute to the NAD(+) site. A disulfide bond links C205 and C249. 279–281 (SAD) serves as a coordination point for L-saccharopine. 318–321 (IDHL) lines the NAD(+) pocket. Positions 371–373 (SRL) match the Microbody targeting signal motif.

Belongs to the AlaDH/PNT family. In terms of assembly, monomer.

It is found in the peroxisome. It catalyses the reaction L-saccharopine + NAD(+) + H2O = L-lysine + 2-oxoglutarate + NADH + H(+). It functions in the pathway amino-acid biosynthesis; L-lysine biosynthesis via AAA pathway; L-lysine from L-alpha-aminoadipate (fungal route): step 3/3. With respect to regulation, inhibited by p-chloromercuribenzoate and iodoacetate by modification of the active site cysteine residue. Inhibited by diethyl pyrocarbonate by modification of histidine residues. Inhibited by pyridoxal 5'-phosphate by modification of an essential lysine residue. Its function is as follows. Catalyzes the NAD(+)-dependent cleavage of saccharopine to L-lysine and 2-oxoglutarate, the final step in the alpha-aminoadipate (AAA) pathway for lysine biosynthesis. This chain is Saccharopine dehydrogenase [NAD(+), L-lysine-forming], found in Saccharomyces cerevisiae (strain ATCC 204508 / S288c) (Baker's yeast).